A 461-amino-acid chain; its full sequence is Threonine/serine transporter ThrP (461 aa).

A run of 12 helical transmembrane segments spans residues 17–37, 40–60, 97–117, 123–143, 156–176, 201–221, 244–264, 278–298, 333–353, 360–380, 401–421, and 430–450; these read IELI…AAST, WAGP…FFIM, WFMW…YVQF, AQWI…LAAV, IKVT…FFGF, GFLT…LIGI, ILIF…WNEI, IGIT…ALSG, VAGV…NYII, FVYV…VILI, IMFP…LIGM, and SLFV…VFGL.

It belongs to the amino acid-polyamine-organocation (APC) superfamily.

It is found in the cell inner membrane. The catalysed reaction is L-threonine(in) + H(+)(in) = L-threonine(out) + H(+)(out). The enzyme catalyses L-serine(in) + H(+)(in) = L-serine(out) + H(+)(out). Permease that mediates the proton-dependent threonine and serine uptake. This chain is Threonine/serine transporter ThrP, found in Salmonella typhi.